A 185-amino-acid chain; its full sequence is Translation initiation factor IF-3 (185 aa).

Belongs to the IF-3 family. As to quaternary structure, monomer.

The protein resides in the cytoplasm. IF-3 binds to the 30S ribosomal subunit and shifts the equilibrium between 70S ribosomes and their 50S and 30S subunits in favor of the free subunits, thus enhancing the availability of 30S subunits on which protein synthesis initiation begins. This is Translation initiation factor IF-3 from Bacteroides thetaiotaomicron (strain ATCC 29148 / DSM 2079 / JCM 5827 / CCUG 10774 / NCTC 10582 / VPI-5482 / E50).